The primary structure comprises 830 residues: Vacuolar protein sorting-associated protein 11 homolog (830 aa).

An RING-type; atypical zinc finger spans residues 733-775 (CDICREMLSMQSIYFLCQHSFHEECLNYKSTKRQEKFLCIICK).

This sequence belongs to the VPS11 family. Part of the homotypic fusion and vacuole protein sorting (HOPS) complex, composed of Vps16A, car/Vps33A, dor/Vps18, Vps39, Vps11 and lt/Vps41. Unlike in other species, not part of the class C core vacuole/endosome tethering (CORVET) complex.

The protein localises to the late endosome membrane. The protein resides in the lysosome membrane. Part of the homotypic fusion and vacuole protein sorting (HOPS) tethering complex involved in endo-lysosomal vesicle trafficking and lysosome biogenesis, but unlike in many other species does not form part of the class C core vacuole/endosome tethering (CORVET) complex. The HOPS complex facilitates docking and fusion of lysosomes with late endosomes and several other types of vesicles. The HOPS complex is also involved in autophagy, pigment granule biogenesis and crinophagy (the elimination of unused secretory granules through fusion with lysosomes). The HOPS complex probably instigates autophagosome-lysosome fusion by binding autophagosome-associated Syx17/syntaxin 17 and promoting assembly of the trans-SNARE complex. Independent of Syx17/syntaxin 17, HOPS is involved in biosynthetic transport to lysosomes and lysosome-related organelles such as eye-pigment granules. Required for autophagocytosis-dependent remodeling of myofibrils and transverse-tubules (T-tubules) during metamorphosis. In Drosophila melanogaster (Fruit fly), this protein is Vacuolar protein sorting-associated protein 11 homolog.